Consider the following 244-residue polypeptide: Carboxy-S-adenosyl-L-methionine synthase (244 aa).

Residues Tyr40, 65–67, 90–91, 119–120, Asn134, and Arg201 each bind S-adenosyl-L-methionine; these read GCS, DN, and DI.

It belongs to the class I-like SAM-binding methyltransferase superfamily. Cx-SAM synthase family. In terms of assembly, homodimer.

It carries out the reaction prephenate + S-adenosyl-L-methionine = carboxy-S-adenosyl-L-methionine + 3-phenylpyruvate + H2O. Its function is as follows. Catalyzes the conversion of S-adenosyl-L-methionine (SAM) to carboxy-S-adenosyl-L-methionine (Cx-SAM). This Geobacter sp. (strain M21) protein is Carboxy-S-adenosyl-L-methionine synthase.